A 300-amino-acid chain; its full sequence is N-acetylmuramic acid 6-phosphate etherase 2 (300 aa).

The region spanning 57–220 (ITAAFANGGR…TTGAMIRSGK (164 aa)) is the SIS domain. Catalysis depends on E85, which acts as the Proton donor. The active site involves E116.

This sequence belongs to the GCKR-like family. MurNAc-6-P etherase subfamily. As to quaternary structure, homodimer.

The enzyme catalyses N-acetyl-D-muramate 6-phosphate + H2O = N-acetyl-D-glucosamine 6-phosphate + (R)-lactate. It participates in amino-sugar metabolism; 1,6-anhydro-N-acetylmuramate degradation. The protein operates within amino-sugar metabolism; N-acetylmuramate degradation. It functions in the pathway cell wall biogenesis; peptidoglycan recycling. Functionally, specifically catalyzes the cleavage of the D-lactyl ether substituent of MurNAc 6-phosphate, producing GlcNAc 6-phosphate and D-lactate. Together with AnmK, is also required for the utilization of anhydro-N-acetylmuramic acid (anhMurNAc) either imported from the medium or derived from its own cell wall murein, and thus plays a role in cell wall recycling. In Vibrio parahaemolyticus serotype O3:K6 (strain RIMD 2210633), this protein is N-acetylmuramic acid 6-phosphate etherase 2.